A 60-amino-acid polypeptide reads, in one-letter code: Myrmicitoxin(1)-Pr4a (60 aa).

An N-terminal signal peptide occupies residues 1 to 23 (MKAIIFLFAVLTVVAIIIPIISG). The propeptide occupies 24 to 33 (EPNAGPHAAS). Residue Q59 is modified to Glutamine amide.

It belongs to the formicidae venom clade 2 family. In terms of tissue distribution, expressed by the venom gland.

The protein localises to the secreted. In terms of biological role, toxin that causes a rapid and irreversible paralysis when intrathoracically injected into insects (blowflies). Does not cause spontaneous nocifensive behaviors by intraplantar injection in mice. The protein is Myrmicitoxin(1)-Pr4a of Pogonomyrmex rugosus (Desert harvester ant).